A 506-amino-acid chain; its full sequence is MGKIKPDEIRSIIKQQIQQYQQEVASVTIGTVFQVGDGIAHIYGLDDVMAGELLEFQDNTIGIALNLETKSVGVVLMGDGTTIQEGSFVRATGKIAQIPVGAAFLGRVVNPLALPIDGKGEIKSDINRIIESPAPGIICRRSIHEPLQTGILAIDSMIPIGRGQRELIIGDRQTGKTAICIDTIINQKGKNIVCVYVAIGQKASSIAQVVNILQERGALEYTIIVAATADSPATLQYLAPYAGATLAEFFMYNGQHTLIIYDDLTKQAQAYREISLLLRRPPGREAYPGDVFYLHSRLLERAAKLNEKLGGGSMTALPVVETQEGDISAYIPTNVISITDGQIFLSADLFNANVRPAINVGVSVSRVGSAAQPKAMKQVAGKLKLELAQFAELEAFSQFASDLDQSTQKQLARGQRLRELLKQVQHSPLNLENQVSAIFAGTHGYLDVISIEHIPIFLVGLWQHLVNHKPKYGEILNSTNTFSEEAQAILIESLKYLTEEFLPPVK.

170–177 (GDRQTGKT) serves as a coordination point for ATP.

Belongs to the ATPase alpha/beta chains family. In terms of assembly, F-type ATPases have 2 components, CF(1) - the catalytic core - and CF(0) - the membrane proton channel. CF(1) has five subunits: alpha(3), beta(3), gamma(1), delta(1), epsilon(1). CF(0) has four main subunits: a, b, b' and c.

It is found in the plastid membrane. The catalysed reaction is ATP + H2O + 4 H(+)(in) = ADP + phosphate + 5 H(+)(out). Functionally, produces ATP from ADP in the presence of a proton gradient across the membrane. The alpha chain is a regulatory subunit. This chain is ATP synthase subunit alpha, plastid, found in Prototheca wickerhamii.